The chain runs to 76 residues: Waprin-Rha1 (76 aa).

An N-terminal signal peptide occupies residues 1 to 24 (MQARVFLLLLGVILLGMMGPMVSA). Residues 25-75 (QDGKAGSCPDVNQPIPPLGVCKTTCATDSNCPDIQKCCKNGCGHMSCTRPS) enclose the WAP domain. Disulfide bonds link Cys32/Cys62, Cys45/Cys66, Cys49/Cys61, and Cys55/Cys71.

It belongs to the venom waprin family. Expressed by the venom gland.

The protein resides in the secreted. Its function is as follows. Damages membranes of susceptible bacteria. Has no hemolytic activity. Not toxic to mice. Does not inhibit the proteinases elastase and cathepsin G. This Rhabdophis tigrinus tigrinus (Tiger keelback snake) protein is Waprin-Rha1.